A 146-amino-acid polypeptide reads, in one-letter code: Large ribosomal subunit protein uL15 (146 aa).

The disordered stretch occupies residues 1-64; the sequence is MQLNTIKPAI…MPMHRRLPKR (64 aa). The span at 30 to 39 shows a compositional bias: basic residues; the sequence is TATKGHKGQK.

The protein belongs to the universal ribosomal protein uL15 family. Part of the 50S ribosomal subunit.

Its function is as follows. Binds to the 23S rRNA. This is Large ribosomal subunit protein uL15 from Geobacter sp. (strain M21).